The chain runs to 200 residues: Claudin-11 (200 aa).

Residue Met-1 is a topological domain, cytoplasmic. The chain crosses the membrane as a helical span at residues 2 to 22; sequence VATCLQVVGFVTSFVGWIGVI. The Extracellular portion of the chain corresponds to 23–75; the sequence is VTTSTNDWVVTCGYTIPTCRKLDELGSKGLWADCVMATGLYHCKPLVDILPCR. The helical transmembrane segment at 76–96 threads the bilayer; that stretch reads ALMIAASVLGLPAILLLLTVL. The Cytoplasmic portion of the chain corresponds to 97-115; it reads PCIRMGQEPGVAKYRRAQL. The helical transmembrane segment at 116–136 threads the bilayer; sequence AGVLLILLALCAIVATIWFPV. The Extracellular segment spans residues 137–150; it reads CAHRETTIVSFGYS. The helical transmembrane segment at 151 to 171 threads the bilayer; that stretch reads LYAGWIGAVLCLVGGCVILCC. The Cytoplasmic segment spans residues 172–200; the sequence is AGDAQAFGENRFYYTAGSSSPTHAKSAHV. Ser-190 and Ser-191 each carry phosphoserine.

Belongs to the claudin family. As to quaternary structure, interacts with tetraspanin-3/TSPAN3. Interacts with OCLN.

It localises to the cell junction. It is found in the tight junction. The protein localises to the cell membrane. Plays a major role in tight junction-specific obliteration of the intercellular space, through calcium-independent cell-adhesion activity. The protein is Claudin-11 (CLDN11) of Pongo abelii (Sumatran orangutan).